The sequence spans 1758 residues: Collagen alpha-2(IV) chain (1758 aa).

The first 26 residues, methionine 1 to serine 26, serve as a signal peptide directing secretion. Residues glutamine 27–glycine 42 form a 7S domain region. Residues glycine 42–alanine 1527 form a triple-helical region region. The span at methionine 47–arginine 62 shows a compositional bias: low complexity. 4 disordered regions span residues methionine 47 to glycine 943, glycine 955 to glycine 1304, glycine 1316 to proline 1339, and glycine 1367 to glycine 1525. Residues glycine 102–glycine 111 show a composition bias toward gly residues. Residues proline 134–proline 149 are compositionally biased toward pro residues. Over residues tyrosine 189 to aspartate 198 the composition is skewed to basic and acidic residues. Residues proline 224–valine 234 are compositionally biased toward low complexity. The O-linked (Xyl...) (glycosaminoglycan) serine glycan is linked to serine 248. Positions proline 258–proline 267 are enriched in basic and acidic residues. Over residues glycine 268–glycine 283 the composition is skewed to gly residues. Residues proline 367–proline 382 are compositionally biased toward pro residues. Residues glycine 398 to glycine 407 show a composition bias toward gly residues. Low complexity-rich tracts occupy residues tyrosine 408–proline 417 and alanine 429–proline 439. Residues lysine 464–glutamate 479 are compositionally biased toward basic and acidic residues. Composition is skewed to low complexity over residues glycine 495–asparagine 509 and proline 568–proline 584. Positions proline 638–proline 648 are enriched in pro residues. Gly residues-rich tracts occupy residues glycine 693–glycine 702, glycine 737–glycine 746, and glycine 782–glycine 791. Residues leucine 839–proline 858 are compositionally biased toward low complexity. Over residues glycine 859–glycine 868 the composition is skewed to gly residues. A compositionally biased stretch (low complexity) spans alanine 929–leucine 938. Positions glycine 958 to glycine 967 are enriched in gly residues. The span at leucine 968–valine 980 shows a compositional bias: low complexity. Residues glycine 988–glycine 997 are compositionally biased toward gly residues. The segment covering leucine 1040–proline 1056 has biased composition (low complexity). Gly residues predominate over residues glycine 1194–glycine 1203. Residues phenylalanine 1237–serine 1250 are compositionally biased toward low complexity. Residues glycine 1251–glycine 1260 show a composition bias toward gly residues. Gly residues predominate over residues glycine 1373 to glycine 1382. Low complexity-rich tracts occupy residues leucine 1413–proline 1425 and glycine 1433–leucine 1454. Gly residues-rich tracts occupy residues glycine 1492 to glycine 1501 and glycine 1507 to glycine 1516. The 224-residue stretch at glycine 1531–threonine 1754 folds into the Collagen IV NC1 domain. Intrachain disulfides connect cysteine 1546–cysteine 1635, cysteine 1579–cysteine 1632, cysteine 1591–cysteine 1597, cysteine 1654–cysteine 1750, cysteine 1688–cysteine 1747, and cysteine 1700–cysteine 1707.

The protein belongs to the type IV collagen family. As to quaternary structure, trimers of two alpha 1(IV) and one alpha 2(IV) chain. Type IV collagen forms a mesh-like network linked through intermolecular interactions between 7S domains and between NC1 domains. Post-translationally, prolines at the third position of the tripeptide repeating unit (G-X-Y) are hydroxylated in some or all of the chains. In terms of processing, type IV collagens contain numerous cysteine residues which are involved in inter- and intramolecular disulfide bonding. 12 of these, located in the NC1 domain, are conserved in all known type IV collagens. The trimeric structure of the NC1 domains is stabilized by covalent bonds between Lys and Met residues. In terms of tissue distribution, localizes to the basement membrane between distal tip cells and the germline. Localizes to the intestinal basement membrane.

Its subcellular location is the secreted. The protein localises to the extracellular space. It localises to the extracellular matrix. The protein resides in the basement membrane. Collagen type IV is specific for basement membranes. Together with fbl-1 and downstream of metalloprotease mig-17, recruits nidogen nid-1 to the gonad basement membrane thereby probably inducing basement membrane remodeling required for the directional migration of distal tip cells. Required to restrict presynaptic growth at the neuromuscular junctions in late larval stage and in adult motor neurons. Vital for embryonic development. The protein is Collagen alpha-2(IV) chain of Caenorhabditis elegans.